The sequence spans 65 residues: Keratin-associated protein 20-2 (65 aa).

It belongs to the KRTAP type 20 family. Interacts with hair keratins.

Its function is as follows. In the hair cortex, hair keratin intermediate filaments are embedded in an interfilamentous matrix, consisting of hair keratin-associated proteins (KRTAP), which are essential for the formation of a rigid and resistant hair shaft through their extensive disulfide bond cross-linking with abundant cysteine residues of hair keratins. The matrix proteins include the high-sulfur and high-glycine-tyrosine keratins. The protein is Keratin-associated protein 20-2 (KRTAP20-2) of Homo sapiens (Human).